A 398-amino-acid polypeptide reads, in one-letter code: Phosphoglycerate kinase (398 aa).

Substrate contacts are provided by residues 24-26 (DFN), Arg40, 63-66 (HMGR), Arg122, and Arg155. ATP contacts are provided by residues Lys206, Gly294, Glu325, and 354–357 (GGDS).

Belongs to the phosphoglycerate kinase family. In terms of assembly, monomer.

It localises to the cytoplasm. The enzyme catalyses (2R)-3-phosphoglycerate + ATP = (2R)-3-phospho-glyceroyl phosphate + ADP. It functions in the pathway carbohydrate degradation; glycolysis; pyruvate from D-glyceraldehyde 3-phosphate: step 2/5. In Picosynechococcus sp. (strain ATCC 27264 / PCC 7002 / PR-6) (Agmenellum quadruplicatum), this protein is Phosphoglycerate kinase.